Consider the following 524-residue polypeptide: AAA ATPase forming ring-shaped complexes (524 aa).

The interval 1 to 29 (MGMGQEKHTDAASQSRDPEAVAAHENDQL) is disordered. The stretch at 22-59 (AAHENDQLRQRNHALAKALTRATEELRKAKAQLEQFMA) forms a coiled coil. Residue 250 to 255 (GNGKTL) coordinates ATP.

It belongs to the AAA ATPase family. As to quaternary structure, homohexamer. Assembles into a hexameric ring structure.

The protein is AAA ATPase forming ring-shaped complexes of Bifidobacterium animalis subsp. lactis (strain BB-12).